The chain runs to 141 residues: Large ribosomal subunit protein uL11 (141 aa).

This sequence belongs to the universal ribosomal protein uL11 family. Part of the ribosomal stalk of the 50S ribosomal subunit. Interacts with L10 and the large rRNA to form the base of the stalk. L10 forms an elongated spine to which L12 dimers bind in a sequential fashion forming a multimeric L10(L12)X complex. In terms of processing, one or more lysine residues are methylated.

In terms of biological role, forms part of the ribosomal stalk which helps the ribosome interact with GTP-bound translation factors. This Herpetosiphon aurantiacus (strain ATCC 23779 / DSM 785 / 114-95) protein is Large ribosomal subunit protein uL11.